Consider the following 114-residue polypeptide: Transmembrane protein 14C (114 aa).

The next 4 helical transmembrane spans lie at 8–28, 33–53, 63–83, and 89–109; these read LMPL…GGII, AGSV…GLGA, VWVF…RFYN, and PAGL…ISLL.

This sequence belongs to the TMEM14 family.

The protein resides in the mitochondrion membrane. In terms of biological role, required for normal heme biosynthesis. In Mus musculus (Mouse), this protein is Transmembrane protein 14C (Tmem14c).